The sequence spans 172 residues: Interferon tau-2 (172 aa).

2 cysteine pairs are disulfide-bonded: Cys-1-Cys-99 and Cys-29-Cys-139. Asn-78 carries N-linked (GlcNAc...) asparagine glycosylation.

Belongs to the alpha/beta interferon family. IFN-alphaII subfamily. Constitutively and exclusively expressed in the mononuclear cells of the extraembryonic trophectoderm.

It localises to the secreted. In terms of biological role, paracrine hormone primarily responsible for maternal recognition of pregnancy. Interacts with endometrial receptors, probably type I interferon receptors, and blocks estrogen receptor expression, preventing the estrogen-induced increase in oxytocin receptor expression in the endometrium. This results in the suppression of the pulsatile endometrial release of the luteolytic hormone prostaglandin F2-alpha, hindering the regression of the corpus luteum (luteolysis) and therefore a return to ovarian cyclicity. This, and a possible direct effect of IFN-tau on prostaglandin synthesis, leads in turn to continued ovarian progesterone secretion, which stimulates the secretion by the endometrium of the nutrients required for the growth of the conceptus. In summary, displays particularly high antiviral and antiproliferative potency concurrently with particular weak cytotoxicity, high antiluteolytic activity and immunomodulatory properties. In contrast with other IFNs, IFN-tau is not virally inducible. The polypeptide is Interferon tau-2 (IFNT2) (Bos taurus (Bovine)).